A 107-amino-acid polypeptide reads, in one-letter code: Regulatory protein SoxS (107 aa).

Residues 8-106 (QTLIEWIDEH…DRTPSDYRHR (99 aa)) enclose the HTH araC/xylS-type domain. 2 consecutive DNA-binding regions (H-T-H motif) follow at residues 25 to 46 (DVVA…RTVT) and 73 to 96 (IFDI…RREF).

Its subcellular location is the cytoplasm. Its function is as follows. Transcriptional activator of the superoxide response regulon of E.coli that includes at least 10 genes such as sodA, nfo, zwf and micF. Binds the DNA sequence 5'-GCACN(7)CAA-3'. It also facilitates the subsequent binding of RNA polymerase to the micF and the nfo promoters. This Salmonella typhimurium (strain LT2 / SGSC1412 / ATCC 700720) protein is Regulatory protein SoxS (soxS).